Here is a 919-residue protein sequence, read N- to C-terminus: MTAPWRRLRSLVWEYWAGLLVCAFWIPDSRGMPHVIRIGGIFEYADGPNAQVMNAEEHAFRFSANIINRNRTLLPNTTLTYDIQRIHFHDSFEATKKACDQLALGVVAIFGPSQGSCTNAVQSICNALEVPHIQLRWKHHPLDNKDTFYVNLYPDYASLSHAILDLVQYLKWRSATVVYDDSTGLIRLQELIMAPSRYNIRLKIRQLPVDSDDSRPLLKEMKRGREFRIIFDCSHTMAAQILKQAMAMGMMTEYYHFIFTTLDLYALDLEPYRYSGVNLTGFRILNVDNPHVSAIVEKWSMERLQAAPRAESGLLDGVMMTDAALLYDAVHIVSVCYQRAPQMTVNSLQCHRHKAWRFGGRFMNFIKEAQWEGLTGRIVFNKTSGLRTDFDLDIISLKEDGLEKVGVWSPADGLNITEVAKGRGPNVTDSLTNRSLIVTTVLEEPFVMFRKSDRTLYGNDRFEGYCIDLLKELAHILGFSYEIRLVEDGKYGAQDDKGQWNGMVKELIDHKADLAVAPLTITHVREKAIDFSKPFMTLGVSILYRKPNGTNPSVFSFLNPLSPDIWMYVLLAYLGVSCVLFVIARFSPYEWYDAHPCNPGSEVVENNFTLLNSFWFGMGSLMQQGSELMPKALSTRIIGGIWWFFTLIIISSYTANLAAFLTVERMESPIDSADDLAKQTKIEYGAVKDGATMTFFKKSKISTFEKMWAFMSSKPSALVKNNEEGIQRALTADYALLMESTTIEYVTQRNCNLTQIGGLIDSKGYGIGTPMGSPYRDKITIAILQLQEEDKLHIMKEKWWRGSGCPEEENKEASALGIQKIGGIFIVLAAGLVLSVLVAVGEFVYKLRKTAEREQRSFCSTVADEIRFSLTCQRRVKHKPQPPMMVKTDAVINMHTFNDRRLPGKDSMACSTSLAPVFP.

An N-terminal signal peptide occupies residues 1–31; sequence MTAPWRRLRSLVWEYWAGLLVCAFWIPDSRG. Residues 32 to 563 are Extracellular-facing; it reads MPHVIRIGGI…VFSFLNPLSP (532 aa). Residues Asn-70, Asn-76, Asn-278, Asn-381, Asn-415, Asn-426, and Asn-433 are each glycosylated (N-linked (GlcNAc...) asparagine). Cys-99 and Cys-350 are joined by a disulfide. L-glutamate contacts are provided by Pro-518, Thr-520, and Arg-525. 2 N-linked (GlcNAc...) asparagine glycosylation sites follow: Asn-548 and Asn-551. The chain crosses the membrane as a helical span at residues 564-584; sequence DIWMYVLLAYLGVSCVLFVIA. Over 585–636 the chain is Cytoplasmic; that stretch reads RFSPYEWYDAHPCNPGSEVVENNFTLLNSFWFGMGSLMQQGSELMPKALSTR. The chain crosses the membrane as a helical span at residues 637 to 657; sequence IIGGIWWFFTLIIISSYTANL. The Extracellular segment spans residues 658–820; the sequence is AAFLTVERME…KEASALGIQK (163 aa). L-glutamate is bound by residues Ala-691, Thr-692, and Glu-739. Asn-752 carries N-linked (GlcNAc...) asparagine glycosylation. Residues 821–841 form a helical membrane-spanning segment; the sequence is IGGIFIVLAAGLVLSVLVAVG. Over 842-919 the chain is Cytoplasmic; that stretch reads EFVYKLRKTA…CSTSLAPVFP (78 aa). Ser-869 is modified (phosphoserine). Residue Lys-887 forms a Glycyl lysine isopeptide (Lys-Gly) (interchain with G-Cter in SUMO1) linkage.

Belongs to the glutamate-gated ion channel (TC 1.A.10.1) family. GRIK3 subfamily. In terms of assembly, homotetramer, and heterotetramer with either GRIK4 or GRIK5. Can form functional heteromeric receptors with GRIK2. Interacts with PRKCABP. Interacts with NETO2.

The protein localises to the cell membrane. It localises to the postsynaptic cell membrane. It catalyses the reaction Ca(2+)(in) = Ca(2+)(out). In terms of biological role, ionotropic glutamate receptor that functions as a cation-permeable ligand-gated ion channel, gated by L-glutamate and the glutamatergic agonist kainic acid. Binding of the excitatory neurotransmitter L-glutamate induces a conformation change, leading to the opening of the cation channel, and thereby converts the chemical signal to an electrical impulse. The receptor then desensitizes rapidly and enters a transient inactive state, characterized by the presence of bound agonist. In association with GRIK2, involved in presynaptic facilitation of glutamate release at hippocampal mossy fiber synapses. The chain is Glutamate receptor ionotropic, kainate 3 (GRIK3) from Macaca fascicularis (Crab-eating macaque).